The sequence spans 290 residues: 4-hydroxy-tetrahydrodipicolinate synthase (290 aa).

Thr-44 provides a ligand contact to pyruvate. Tyr-132 functions as the Proton donor/acceptor in the catalytic mechanism. Residue Lys-160 is the Schiff-base intermediate with substrate of the active site. Residue Ile-202 coordinates pyruvate.

The protein belongs to the DapA family. Homotetramer; dimer of dimers.

It localises to the cytoplasm. It carries out the reaction L-aspartate 4-semialdehyde + pyruvate = (2S,4S)-4-hydroxy-2,3,4,5-tetrahydrodipicolinate + H2O + H(+). It participates in amino-acid biosynthesis; L-lysine biosynthesis via DAP pathway; (S)-tetrahydrodipicolinate from L-aspartate: step 3/4. Catalyzes the condensation of (S)-aspartate-beta-semialdehyde [(S)-ASA] and pyruvate to 4-hydroxy-tetrahydrodipicolinate (HTPA). In Pelobacter propionicus (strain DSM 2379 / NBRC 103807 / OttBd1), this protein is 4-hydroxy-tetrahydrodipicolinate synthase.